Here is a 390-residue protein sequence, read N- to C-terminus: Spore development regulator vosA (390 aa).

Residues 3–132 enclose the Velvet domain; it reads NNTSSDFDLI…ADQGVKLRIR (130 aa). The span at 137–149 shows a compositional bias: basic and acidic residues; sequence TMLKRSTRPDEFH. 2 disordered regions span residues 137 to 191 and 265 to 390; these read TMLK…PVKR and QASA…GTPQ. Over residues 165 to 175 the composition is skewed to low complexity; that stretch reads PPSSSYGGYPP. Positions 273-280 match the Nuclear localization signal motif; sequence IPDPTGQS. Composition is skewed to polar residues over residues 350–364 and 371–390; these read QTPQ…SQMV and SSVT…GTPQ.

Belongs to the velvet family. VosA subfamily. Forms a heterodimeric complex with velB; the formation of the velB-vosA complex is light-dependent. Interacts with velA, velB and velC.

The protein resides in the nucleus. In terms of biological role, component of the velB-VosA heterodimeric complex that plays a dual role in activating genes associated with spore maturation and repressing certain development-associated genes. The complex binds DNA through the DNA-binding domain of vosA that recognizes an 11-nucleotide consensus sequence 5'-CTGGCCGCGGC-3' consisting of two motifs in the promoters of key developmental regulatory genes. The polypeptide is Spore development regulator vosA (Penicillium rubens (strain ATCC 28089 / DSM 1075 / NRRL 1951 / Wisconsin 54-1255) (Penicillium chrysogenum)).